A 258-amino-acid polypeptide reads, in one-letter code: Thiazole synthase (258 aa).

Lys100 serves as the catalytic Schiff-base intermediate with DXP. 1-deoxy-D-xylulose 5-phosphate-binding positions include Gly161, 187–188, and 209–210; these read AG and NT.

This sequence belongs to the ThiG family. In terms of assembly, homotetramer. Forms heterodimers with either ThiH or ThiS.

It is found in the cytoplasm. It carries out the reaction [ThiS sulfur-carrier protein]-C-terminal-Gly-aminoethanethioate + 2-iminoacetate + 1-deoxy-D-xylulose 5-phosphate = [ThiS sulfur-carrier protein]-C-terminal Gly-Gly + 2-[(2R,5Z)-2-carboxy-4-methylthiazol-5(2H)-ylidene]ethyl phosphate + 2 H2O + H(+). The protein operates within cofactor biosynthesis; thiamine diphosphate biosynthesis. Catalyzes the rearrangement of 1-deoxy-D-xylulose 5-phosphate (DXP) to produce the thiazole phosphate moiety of thiamine. Sulfur is provided by the thiocarboxylate moiety of the carrier protein ThiS. In vitro, sulfur can be provided by H(2)S. This Campylobacter jejuni (strain RM1221) protein is Thiazole synthase.